We begin with the raw amino-acid sequence, 352 residues long: Maleylacetate reductase (352 aa).

The protein belongs to the iron-containing alcohol dehydrogenase family.

The catalysed reaction is 3-oxoadipate + NAD(+) = maleylacetate + NADH + H(+). It carries out the reaction 3-oxoadipate + NADP(+) = maleylacetate + NADPH + H(+). It participates in aromatic compound metabolism; 3-chlorocatechol degradation. This is Maleylacetate reductase (tcbF) from Pseudomonas sp. (strain P51).